A 202-amino-acid polypeptide reads, in one-letter code: Endothelin-1 (202 aa).

The signal sequence occupies residues 1-25 (MDYLPVLFSLLLVVFQGAPEAAVLG). Positions 26-50 (AELSTGPDSGGEKPAPSAPWRPRRS) are excised as a propeptide. The interval 28 to 48 (LSTGPDSGGEKPAPSAPWRPR) is disordered. 2 cysteine pairs are disulfide-bonded: cysteine 53–cysteine 67 and cysteine 55–cysteine 63. Positions 74 to 202 (VNTPEHIVPY…EKKVTHNRTH (129 aa)) are excised as a propeptide. The tract at residues 110–124 (CQCASQKDKKCWTFC) is endothelin-like.

It belongs to the endothelin/sarafotoxin family.

It localises to the secreted. Its function is as follows. Endothelins are endothelium-derived vasoconstrictor peptides. Probable ligand for G-protein coupled receptors EDNRA and EDNRB which activates PTK2B, BCAR1, BCAR3 and, GTPases RAP1 and RHOA cascade in glomerular mesangial cells. Also binds the DEAR/FBXW7-AS1 receptor. Promotes mesenteric arterial wall remodeling via activation of ROCK signaling and subsequent colocalization of NFATC3 with F-actin filaments. NFATC3 then translocates to the nucleus where it subsequently promotes the transcription of the smooth muscle hypertrophy and differentiation marker ACTA2. The polypeptide is Endothelin-1 (EDN1) (Felis catus (Cat)).